The primary structure comprises 146 residues: Holo-[acyl-carrier-protein] synthase (146 aa).

Asp9 and Glu58 together coordinate Mg(2+).

The protein belongs to the P-Pant transferase superfamily. AcpS family. Mg(2+) serves as cofactor.

It localises to the cytoplasm. It carries out the reaction apo-[ACP] + CoA = holo-[ACP] + adenosine 3',5'-bisphosphate + H(+). Functionally, transfers the 4'-phosphopantetheine moiety from coenzyme A to a Ser of acyl-carrier-protein. In Baumannia cicadellinicola subsp. Homalodisca coagulata, this protein is Holo-[acyl-carrier-protein] synthase.